The following is a 458-amino-acid chain: Histidine--tRNA ligase (458 aa).

Belongs to the class-II aminoacyl-tRNA synthetase family. As to quaternary structure, homodimer.

Its subcellular location is the cytoplasm. It carries out the reaction tRNA(His) + L-histidine + ATP = L-histidyl-tRNA(His) + AMP + diphosphate + H(+). The polypeptide is Histidine--tRNA ligase (Azobacteroides pseudotrichonymphae genomovar. CFP2).